Here is a 944-residue protein sequence, read N- to C-terminus: Isoleucine--tRNA ligase (944 aa).

A 'HIGH' region motif is present at residues 58–68 (PYANGSIHIGH). Glu563 lines the L-isoleucyl-5'-AMP pocket. Residues 604–608 (KMSKS) carry the 'KMSKS' region motif. Lys607 contributes to the ATP binding site. The Zn(2+) site is built by Cys907, Cys910, Cys927, and Cys930.

Belongs to the class-I aminoacyl-tRNA synthetase family. IleS type 1 subfamily. Monomer. It depends on Zn(2+) as a cofactor.

The protein localises to the cytoplasm. The enzyme catalyses tRNA(Ile) + L-isoleucine + ATP = L-isoleucyl-tRNA(Ile) + AMP + diphosphate. Functionally, catalyzes the attachment of isoleucine to tRNA(Ile). As IleRS can inadvertently accommodate and process structurally similar amino acids such as valine, to avoid such errors it has two additional distinct tRNA(Ile)-dependent editing activities. One activity is designated as 'pretransfer' editing and involves the hydrolysis of activated Val-AMP. The other activity is designated 'posttransfer' editing and involves deacylation of mischarged Val-tRNA(Ile). This chain is Isoleucine--tRNA ligase, found in Salmonella typhimurium (strain LT2 / SGSC1412 / ATCC 700720).